The chain runs to 62 residues: Agnoprotein (62 aa).

Over 1 to 23 the chain is Cytoplasmic; that stretch reads MVLRRLSRQASVKVRRSWTESKK. A helical; Signal-anchor for type II membrane protein transmembrane segment spans residues 24–40; it reads TAQRLFVFVLELLLQFC. The Extracellular portion of the chain corresponds to 41–62; the sequence is EGEDTVDGKRKKPERLTEKPES.

Belongs to the polyomaviruses agnoprotein family. In terms of assembly, homooligomer. Interacts with VP1. Interacts with large T antigen; this interaction may impact upon the activity of T-antigen on the control of viral gene transcription and replication. Interacts with small t antigen. Interacts with host CBX5; this interaction induces the dissociation of CBX5 from LBR, resulting in destabilization of the nuclear envelope. In terms of processing, phosphorylated by host kinase. Phosphorylation segregates agnoprotein in cytoplasm, whereas unphosphorylated agnoprotein migrate to the nucleus.

Its subcellular location is the host cytoplasm. The protein localises to the host nucleus membrane. The protein resides in the host rough endoplasmic reticulum membrane. It localises to the host cell membrane. In terms of biological role, alters the structure of the nuclear envelope by interacting with host CBX5 and disrupting CBX5 association with LBR. Involved in the perinuclear-nuclear localization of the capsid protein VP1 during virion assembly and maturation. Plays an important role in the release of progeny virions from infected cells and in viral propagation, probably by acting as a viral ionic channel in the host plasma membrane. Allows influx of extracellular calcium ions in the host cell. May contribute to viral genome transcription and translation of viral late proteins. The sequence is that of Agnoprotein from Simian virus 40 (SV40).